Here is a 454-residue protein sequence, read N- to C-terminus: Exopolyphosphatase PRUNE1 (454 aa).

Met-1 carries the N-acetylmethionine modification. Mn(2+) contacts are provided by Asp-28, Asp-30, Asp-106, and Asp-179. Positions 106–108 (DHH) match the DHH motif motif. The essential for homodimerization stretch occupies residues 394-421 (SLIAGLSQDDEDPPLPPTPMNSLVDECP). The disordered stretch occupies residues 398–421 (GLSQDDEDPPLPPTPMNSLVDECP). At Ser-400 the chain carries Phosphoserine. At Thr-411 the chain carries Phosphothreonine. A Phosphoserine modification is found at Ser-415.

It belongs to the PPase class C family. Prune subfamily. Homooligomer. Able to homodimerize via its C-terminal domain. Interacts with NME1. Interacts with GSK3; at focal adhesion complexes where paxillin and vinculin are colocalized. Interacts with alpha and beta tubulin. Mn(2+) is required as a cofactor.

The protein localises to the cytoplasm. It is found in the nucleus. It localises to the cell junction. The protein resides in the focal adhesion. The catalysed reaction is diphosphate + H2O = 2 phosphate + H(+). Activated by magnesium ions and inhibited by manganese ions. Inhibited by dipyridamole, moderately sensitive to IBMX and inhibited by vinpocetine. Functionally, phosphodiesterase (PDE) that has higher activity toward cAMP than cGMP, as substrate. Plays a role in cell proliferation, migration and differentiation, and acts as a negative regulator of NME1. Plays a role in the regulation of neurogenesis. Involved in the regulation of microtubule polymerization. This is Exopolyphosphatase PRUNE1 (Prune1) from Rattus norvegicus (Rat).